Reading from the N-terminus, the 287-residue chain is Ribosomal RNA small subunit methyltransferase A (287 aa).

Positions 1-15 are enriched in polar residues; sequence MSKTTFDAQSITNSL. The interval 1-20 is disordered; the sequence is MSKTTFDAQSITNSLRAAKH. S-adenosyl-L-methionine-binding residues include Asn-29, Leu-31, Gly-56, Glu-77, and Asn-126.

The protein belongs to the class I-like SAM-binding methyltransferase superfamily. rRNA adenine N(6)-methyltransferase family. RsmA subfamily.

It is found in the cytoplasm. The enzyme catalyses adenosine(1518)/adenosine(1519) in 16S rRNA + 4 S-adenosyl-L-methionine = N(6)-dimethyladenosine(1518)/N(6)-dimethyladenosine(1519) in 16S rRNA + 4 S-adenosyl-L-homocysteine + 4 H(+). Functionally, specifically dimethylates two adjacent adenosines (A1518 and A1519) in the loop of a conserved hairpin near the 3'-end of 16S rRNA in the 30S particle. May play a critical role in biogenesis of 30S subunits. In Psychrobacter cryohalolentis (strain ATCC BAA-1226 / DSM 17306 / VKM B-2378 / K5), this protein is Ribosomal RNA small subunit methyltransferase A.